We begin with the raw amino-acid sequence, 659 residues long: MIKYNPAYLNLNERLSQIWLNKYTILFILAAFKLLFFSTSLRNALDVSKSYILSNCGTIDTMYSKTLNSTPHYIGVFGNYLINKALIQTVKTSLSTVSLLVYASEEILEFMVDFYLGTYECLLVAAIDGTVDTAVNATEKLIGFVNGSVGSIANDLDDGLNDLSKIINKAISAAEKVGSLFSDDDDDDDDDSSSSSKNIASVNLTIKALRNLYIPSSINDKLEKISDSTPTFDEVKNSTKNLIGIPFEKIRKEIKSINTTNIVGDPDVLYVPPINDNSNYQGICSANKNHITSFFYSMDHLLKVATIVCIVLLLIGAVVVLFPEFLEEFKLWKRLTQLREFYWYNKDLYPSSSELETINQEVKDPFNDKKNIIPDQFDVIAGYQTCFNPWHTRIVNFIEKIITYFNRSSFQNESNKRRRQWIVAYVASERALFILGIGMLAFFVSILQLIIITLLKRTFDNNSNMININSIANSSAVHSLKDDVSTWSNQVNLYIKQTEGNLNHQVFGWIEDSTESLNNTVTHMINGIDDTLADIFNGTLLYNPMKTVVSCVIENKLYTIEKSLTWIHNKANVTLPRINGDDINNLLSSSNNSTNATGSNNLATELFEDVIDDSKKIINKVIQTYHKSIIYEMIISLVFIGIWSSQIPIALVIARFKNF.

At 1-17 the chain is on the extracellular side; the sequence is MIKYNPAYLNLNERLSQ. Residues 18–38 traverse the membrane as a helical segment; it reads IWLNKYTILFILAAFKLLFFS. Residues 39 to 106 lie on the Cytoplasmic side of the membrane; it reads TSLRNALDVS…VSLLVYASEE (68 aa). A helical transmembrane segment spans residues 107–127; that stretch reads ILEFMVDFYLGTYECLLVAAI. The Extracellular portion of the chain corresponds to 128-305; sequence DGTVDTAVNA…YSMDHLLKVA (178 aa). Residues Asn-136, Asn-146, Asn-203, Asn-237, and Asn-258 are each glycosylated (N-linked (GlcNAc...) asparagine). A helical transmembrane segment spans residues 306–326; that stretch reads TIVCIVLLLIGAVVVLFPEFL. Residues 327 to 431 are Cytoplasmic-facing; sequence EEFKLWKRLT…IVAYVASERA (105 aa). Residues 432 to 452 traverse the membrane as a helical segment; that stretch reads LFILGIGMLAFFVSILQLIII. Topologically, residues 453–632 are extracellular; that stretch reads TLLKRTFDNN…QTYHKSIIYE (180 aa). N-linked (GlcNAc...) asparagine glycans are attached at residues Asn-461, Asn-473, Asn-518, Asn-537, Asn-572, Asn-591, Asn-592, and Asn-595. A helical transmembrane segment spans residues 633-653; that stretch reads MIISLVFIGIWSSQIPIALVI. Residues 654–659 are Cytoplasmic-facing; it reads ARFKNF.

Belongs to the PRM1 family.

It localises to the cell membrane. Its function is as follows. Involved in cell fusion during mating by stabilizing the plasma membrane fusion event. This Vanderwaltozyma polyspora (strain ATCC 22028 / DSM 70294 / BCRC 21397 / CBS 2163 / NBRC 10782 / NRRL Y-8283 / UCD 57-17) (Kluyveromyces polysporus) protein is Plasma membrane fusion protein PRM1 (PRM1).